We begin with the raw amino-acid sequence, 295 residues long: Inositol polyphosphate multikinase IPK2 (295 aa).

Positions 1–21 are disordered; it reads MASDLRPPEHQVAGHRASADK.

The protein belongs to the inositol phosphokinase (IPK) family.

The enzyme catalyses 1D-myo-inositol 1,4,5-trisphosphate + 2 ATP = 1D-myo-inositol 1,3,4,5,6-pentakisphosphate + 2 ADP + 2 H(+). It catalyses the reaction 1D-myo-inositol 1,3,4,6-tetrakisphosphate + ATP = 1D-myo-inositol 1,3,4,5,6-pentakisphosphate + ADP + H(+). Inositol phosphate kinase with a broad substrate specificity. Phosphorylates inositol 1,4,5-trisphosphate (Ins(1,4,5)P3), inositol 1,4,5,6-tetrakisphosphate (Ins(1,4,5,6)P4), inositol 1,3,4,5-tetrakisphosphate (Ins(1,3,4,5)P4), inositol 1,3,4,6-tetrakisphosphate (Ins(1,3,4,6)P4) and inositol 1,2,3,4,6-pentakisphosphate (Ins(1,2,3,4,6)P5) but not inositol 1,4-bisphosphate (Ins(1,4)P2), inositol 1,3,4-trisphosphate (Ins(1,3,4)P3), inositol 1,2,6-trisphosphate (Ins(1,2,6)P3), inositol 3,4,5,6-tetrakisphosphate (Ins(3,4,5,6)P4), inositol 1,3,4,5,6-pentakisphosphate (Ins(1,3,4,5,6)P5), inositol 1,2,4,5,6-pentakisphosphate (Ins(1,2,4,5,6)P5) or inositol hexakisphosphate (InsP6). Regulates pollen and root development probably through the regulation of InsP3-mediated calcium accumulation. The polypeptide is Inositol polyphosphate multikinase IPK2 (Oryza sativa subsp. indica (Rice)).